Consider the following 91-residue polypeptide: Small ribosomal subunit protein uS19 (91 aa).

The protein belongs to the universal ribosomal protein uS19 family.

In terms of biological role, protein S19 forms a complex with S13 that binds strongly to the 16S ribosomal RNA. This chain is Small ribosomal subunit protein uS19, found in Methylobacillus flagellatus (strain ATCC 51484 / DSM 6875 / VKM B-1610 / KT).